We begin with the raw amino-acid sequence, 428 residues long: Adenylosuccinate synthetase (428 aa).

GTP-binding positions include 12 to 18 (GDEGKGK) and 40 to 42 (GHT). Aspartate 13 (proton acceptor) is an active-site residue. Residues aspartate 13 and glycine 40 each coordinate Mg(2+). IMP-binding positions include 13–16 (DEGK), 38–41 (NAGH), threonine 130, arginine 144, glutamine 225, threonine 240, and arginine 304. Histidine 41 acts as the Proton donor in catalysis. 300–306 (VTTGRAR) contributes to the substrate binding site. GTP is bound by residues arginine 306, 332–334 (KID), and 414–416 (SVG).

Belongs to the adenylosuccinate synthetase family. As to quaternary structure, homodimer. Mg(2+) is required as a cofactor.

Its subcellular location is the cytoplasm. It carries out the reaction IMP + L-aspartate + GTP = N(6)-(1,2-dicarboxyethyl)-AMP + GDP + phosphate + 2 H(+). It functions in the pathway purine metabolism; AMP biosynthesis via de novo pathway; AMP from IMP: step 1/2. Its function is as follows. Plays an important role in the de novo pathway of purine nucleotide biosynthesis. Catalyzes the first committed step in the biosynthesis of AMP from IMP. The polypeptide is Adenylosuccinate synthetase (Clostridium botulinum (strain ATCC 19397 / Type A)).